A 118-amino-acid chain; its full sequence is Ribosome-binding factor A (118 aa).

This sequence belongs to the RbfA family. In terms of assembly, monomer. Binds 30S ribosomal subunits, but not 50S ribosomal subunits or 70S ribosomes.

Its subcellular location is the cytoplasm. In terms of biological role, one of several proteins that assist in the late maturation steps of the functional core of the 30S ribosomal subunit. Associates with free 30S ribosomal subunits (but not with 30S subunits that are part of 70S ribosomes or polysomes). Required for efficient processing of 16S rRNA. May interact with the 5'-terminal helix region of 16S rRNA. The sequence is that of Ribosome-binding factor A from Clostridium beijerinckii (strain ATCC 51743 / NCIMB 8052) (Clostridium acetobutylicum).